The primary structure comprises 340 residues: MVNVLINGYGSIGKRVADAVAKQDDMKVIGVTKTKPDFEARMAVEKGYKLFAAIPERKHLFEEAGIPVEGTLDDIIEDADIVVDGAPKKIGKANLENVYKKHGVKAIIQGGEKAGDAQDSFNSLWSYDRCYGKDYIRLVSCNTTGLCRSMYAINSVADILKARIVLIRRAADPNDVKTGPVNAIVPNPVTVPSHHGPDVVSVIPELDGKIMTSAVIVPTTLMHMHSIMVETSGTNRDEIIDALAKTPRILTLKASEGFDSTATIIEYARDLGRSRYDLNEIAVWEESVNVVDNEVYMMQAIHQESDVIPENVDCIRAMLEMESDNLKSIEKTNKAMGLIK.

NAD(+) contacts are provided by residues 11-12 (SI) and G111. 140–142 (SCN) is a binding site for D-glyceraldehyde 3-phosphate. Catalysis depends on C141, which acts as the Nucleophile. Residue R169 participates in NAD(+) binding. 195–196 (HG) is a D-glyceraldehyde 3-phosphate binding site. An NAD(+)-binding site is contributed by Q303.

Belongs to the glyceraldehyde-3-phosphate dehydrogenase family. As to quaternary structure, homotetramer.

The protein resides in the cytoplasm. It catalyses the reaction D-glyceraldehyde 3-phosphate + phosphate + NADP(+) = (2R)-3-phospho-glyceroyl phosphate + NADPH + H(+). It carries out the reaction D-glyceraldehyde 3-phosphate + phosphate + NAD(+) = (2R)-3-phospho-glyceroyl phosphate + NADH + H(+). Its pathway is carbohydrate degradation; glycolysis; pyruvate from D-glyceraldehyde 3-phosphate: step 1/5. The sequence is that of Glyceraldehyde-3-phosphate dehydrogenase from Methanococcus maripaludis (strain C7 / ATCC BAA-1331).